An 859-amino-acid polypeptide reads, in one-letter code: DNA mismatch repair protein MutS (859 aa).

617 to 624 (GPNMGGKS) serves as a coordination point for ATP. The tract at residues 799–821 (ETTSLPHEQPRAKPGKPAVPQQS) is disordered.

Belongs to the DNA mismatch repair MutS family.

Its function is as follows. This protein is involved in the repair of mismatches in DNA. It is possible that it carries out the mismatch recognition step. This protein has a weak ATPase activity. This chain is DNA mismatch repair protein MutS, found in Pseudomonas syringae pv. syringae (strain B728a).